The following is a 177-amino-acid chain: 3-hydroxyanthranilate 3,4-dioxygenase (177 aa).

Arg47 contacts O2. Fe cation contacts are provided by His51, Glu57, and His95. Substrate is bound at residue Glu57. Positions 99 and 110 each coordinate substrate. Fe cation is bound by residues Cys125, Cys128, Cys162, and Cys165.

Belongs to the 3-HAO family. In terms of assembly, homodimer. Fe(2+) serves as cofactor.

It catalyses the reaction 3-hydroxyanthranilate + O2 = (2Z,4Z)-2-amino-3-carboxymuconate 6-semialdehyde. It participates in cofactor biosynthesis; NAD(+) biosynthesis; quinolinate from L-kynurenine: step 3/3. In terms of biological role, catalyzes the oxidative ring opening of 3-hydroxyanthranilate to 2-amino-3-carboxymuconate semialdehyde, which spontaneously cyclizes to quinolinate. The chain is 3-hydroxyanthranilate 3,4-dioxygenase from Burkholderia cenocepacia (strain ATCC BAA-245 / DSM 16553 / LMG 16656 / NCTC 13227 / J2315 / CF5610) (Burkholderia cepacia (strain J2315)).